Here is a 323-residue protein sequence, read N- to C-terminus: o-succinylbenzoate synthase (323 aa).

Lysine 134 serves as the catalytic Proton donor. Positions 162, 191, and 214 each coordinate Mg(2+). Catalysis depends on lysine 236, which acts as the Proton acceptor.

Belongs to the mandelate racemase/muconate lactonizing enzyme family. MenC type 1 subfamily. It depends on a divalent metal cation as a cofactor.

The catalysed reaction is (1R,6R)-6-hydroxy-2-succinyl-cyclohexa-2,4-diene-1-carboxylate = 2-succinylbenzoate + H2O. The protein operates within quinol/quinone metabolism; 1,4-dihydroxy-2-naphthoate biosynthesis; 1,4-dihydroxy-2-naphthoate from chorismate: step 4/7. Its pathway is quinol/quinone metabolism; menaquinone biosynthesis. In terms of biological role, converts 2-succinyl-6-hydroxy-2,4-cyclohexadiene-1-carboxylate (SHCHC) to 2-succinylbenzoate (OSB). The polypeptide is o-succinylbenzoate synthase (Yersinia pseudotuberculosis serotype O:1b (strain IP 31758)).